Consider the following 227-residue polypeptide: Thymidine kinase 1 (227 aa).

ATP contacts are provided by residues 15–22 (GPMFSGKT), 47–49 (DTR), and 91–94 (DEGQ). The Proton acceptor role is filled by Glu92. Substrate is bound at residue Phe122. Cys147 and Cys150 together coordinate Zn(2+). Substrate-binding positions include 166-170 (IELIG) and Tyr175. Positions 179 and 182 each coordinate Zn(2+). The segment covering 187 to 196 (QNEGNSTKPS) has biased composition (polar residues). Residues 187-227 (QNEGNSTKPSKTARHSHSQSAPSVAPLAVNINPDDHLNNDY) are disordered.

This sequence belongs to the thymidine kinase family. In terms of assembly, interacts with calmodulin in the presence of Ca(2+).

It carries out the reaction thymidine + ATP = dTMP + ADP + H(+). This chain is Thymidine kinase 1, found in Dictyostelium discoideum (Social amoeba).